The primary structure comprises 201 residues: Recombination protein RecR (201 aa).

The C4-type zinc-finger motif lies at 60-75 (CSCCGNVDTSDPCTIC). A Toprim domain is found at 83 to 178 (ATLIVVEDVS…RVTRLAHGVP (96 aa)).

It belongs to the RecR family.

Its function is as follows. May play a role in DNA repair. It seems to be involved in an RecBC-independent recombinational process of DNA repair. It may act with RecF and RecO. The sequence is that of Recombination protein RecR from Brucella melitensis biotype 2 (strain ATCC 23457).